The following is a 623-amino-acid chain: Sterol O-acyltransferase 1 (623 aa).

The segment at 20–99 (NSAEPSKRHS…EQAEEKYPVD (80 aa)) is disordered. Residues 57–72 (ATTTATGVAVAAAAAA) show a composition bias toward low complexity. A compositionally biased stretch (acidic residues) spans 83 to 92 (DGDDEQDEQA). The next 5 helical transmembrane spans lie at 195–215 (LESN…WIAF), 242–262 (LFTI…VVFV), 277–297 (GFVA…PVYV), 384–404 (ISCS…QINY), and 422–442 (IMGT…PVAM). An FYXDWWN motif motif is present at residues 504 to 510 (FYGDWWN). A run of 2 helical transmembrane segments spans residues 548-568 (ATLF…FAIF) and 603-623 (VVFT…YLTL). Histidine 560 is a catalytic residue.

This sequence belongs to the membrane-bound acyltransferase family. Sterol o-acyltransferase subfamily.

It localises to the endoplasmic reticulum membrane. Its function is as follows. Sterol O-acyltransferase that catalyzes the formation of stery esters. This chain is Sterol O-acyltransferase 1 (ARE1), found in Saccharomyces uvarum (strain ATCC 76518 / CBS 7001 / CLIB 283 / NBRC 10550 / MCYC 623 / NCYC 2669 / NRRL Y-11845) (Yeast).